A 225-amino-acid polypeptide reads, in one-letter code: Ribulose-phosphate 3-epimerase (225 aa).

Ser-9 contributes to the substrate binding site. The a divalent metal cation site is built by His-34, Asp-36, and His-68. Asp-36 acts as the Proton acceptor in catalysis. Substrate-binding positions include His-68, 144–147 (GFGG), 177–179 (DGG), and 199–200 (GS). Asp-177 contacts a divalent metal cation. Asp-177 (proton donor) is an active-site residue.

This sequence belongs to the ribulose-phosphate 3-epimerase family. A divalent metal cation serves as cofactor.

It carries out the reaction D-ribulose 5-phosphate = D-xylulose 5-phosphate. The protein operates within carbohydrate degradation. In terms of biological role, catalyzes the reversible epimerization of D-ribulose 5-phosphate to D-xylulose 5-phosphate. This Escherichia coli O157:H7 protein is Ribulose-phosphate 3-epimerase.